Consider the following 40-residue polypeptide: Potassium channel toxin alpha-KTx 12.3 (40 aa).

4 disulfides stabilise this stretch: cysteine 2/cysteine 5, cysteine 10/cysteine 31, cysteine 16/cysteine 36, and cysteine 20/cysteine 38.

In terms of tissue distribution, expressed by the venom gland.

It localises to the secreted. In terms of biological role, inhibits high conductance calcium-activated potassium channels (KCNMA). Inhibits Shaker B potassium channels. The polypeptide is Potassium channel toxin alpha-KTx 12.3 (Tityus costatus (Brazilian scorpion)).